A 599-amino-acid chain; its full sequence is Sulfite reductase [NADPH] flavoprotein alpha-component (599 aa).

A Flavodoxin-like domain is found at 63–201 (ITVISASQTG…LATAWRKQVV (139 aa)). Residues 69–74 (SQTGNA), 116–119 (STQG), and 152–161 (LGDTSYENFC) each bind FMN. An FAD-binding FR-type domain is found at 234–448 (EQPLTAQLAV…IEHNDNFRLP (215 aa)). FAD contacts are provided by residues T322, H356, 386 to 389 (RLYS), 404 to 406 (TVG), Y410, and 419 to 422 (GGAS). Residues 519 to 520 (SR), 525 to 529 (KVYVQ), and D561 each bind NADP(+). Y599 lines the FAD pocket.

The protein belongs to the NADPH-dependent sulphite reductase flavoprotein subunit CysJ family. This sequence in the N-terminal section; belongs to the flavodoxin family. In the C-terminal section; belongs to the flavoprotein pyridine nucleotide cytochrome reductase family. In terms of assembly, alpha(8)-beta(8). The alpha component is a flavoprotein, the beta component is a hemoprotein. FAD is required as a cofactor. The cofactor is FMN.

The catalysed reaction is hydrogen sulfide + 3 NADP(+) + 3 H2O = sulfite + 3 NADPH + 4 H(+). It functions in the pathway sulfur metabolism; hydrogen sulfide biosynthesis; hydrogen sulfide from sulfite (NADPH route): step 1/1. In terms of biological role, component of the sulfite reductase complex that catalyzes the 6-electron reduction of sulfite to sulfide. This is one of several activities required for the biosynthesis of L-cysteine from sulfate. The flavoprotein component catalyzes the electron flow from NADPH -&gt; FAD -&gt; FMN to the hemoprotein component. The chain is Sulfite reductase [NADPH] flavoprotein alpha-component from Serratia proteamaculans (strain 568).